Consider the following 195-residue polypeptide: Imidazoleglycerol-phosphate dehydratase (195 aa).

The protein belongs to the imidazoleglycerol-phosphate dehydratase family.

It localises to the cytoplasm. It catalyses the reaction D-erythro-1-(imidazol-4-yl)glycerol 3-phosphate = 3-(imidazol-4-yl)-2-oxopropyl phosphate + H2O. It participates in amino-acid biosynthesis; L-histidine biosynthesis; L-histidine from 5-phospho-alpha-D-ribose 1-diphosphate: step 6/9. This is Imidazoleglycerol-phosphate dehydratase from Beijerinckia indica subsp. indica (strain ATCC 9039 / DSM 1715 / NCIMB 8712).